The chain runs to 106 residues: Phosphoribosyl-ATP pyrophosphatase (106 aa).

Belongs to the PRA-PH family.

It localises to the cytoplasm. The catalysed reaction is 1-(5-phospho-beta-D-ribosyl)-ATP + H2O = 1-(5-phospho-beta-D-ribosyl)-5'-AMP + diphosphate + H(+). The protein operates within amino-acid biosynthesis; L-histidine biosynthesis; L-histidine from 5-phospho-alpha-D-ribose 1-diphosphate: step 2/9. The protein is Phosphoribosyl-ATP pyrophosphatase of Lactiplantibacillus plantarum (strain ATCC BAA-793 / NCIMB 8826 / WCFS1) (Lactobacillus plantarum).